Consider the following 338-residue polypeptide: Phosphatidate cytidylyltransferase, mitochondrial (338 aa).

Belongs to the TAM41 family. Requires Mg(2+) as cofactor.

It localises to the mitochondrion inner membrane. The enzyme catalyses a 1,2-diacyl-sn-glycero-3-phosphate + CTP + H(+) = a CDP-1,2-diacyl-sn-glycerol + diphosphate. It participates in phospholipid metabolism; CDP-diacylglycerol biosynthesis; CDP-diacylglycerol from sn-glycerol 3-phosphate: step 3/3. Functionally, catalyzes the conversion of phosphatidic acid (PA) to CDP-diacylglycerol (CDP-DAG), an essential intermediate in the synthesis of phosphatidylglycerol, cardiolipin and phosphatidylinositol. This chain is Phosphatidate cytidylyltransferase, mitochondrial (tamm41), found in Danio rerio (Zebrafish).